Consider the following 32-residue polypeptide: Photosystem II reaction center protein Z (32 aa).

Residues 9 to 31 traverse the membrane as a helical segment; that stretch reads FILLGAVTWAILVFIVGSLNSYV.

The protein belongs to the PsbZ family. In terms of assembly, PSII is composed of 1 copy each of membrane proteins PsbA, PsbB, PsbC, PsbD, PsbE, PsbF, PsbH, PsbI, PsbJ, PsbK, PsbL, PsbM, PsbT, PsbY, PsbZ, Psb30/Ycf12, at least 3 peripheral proteins of the oxygen-evolving complex and a large number of cofactors. It forms dimeric complexes.

Its subcellular location is the plastid. The protein localises to the chloroplast thylakoid membrane. Functionally, may control the interaction of photosystem II (PSII) cores with the light-harvesting antenna, regulates electron flow through the 2 photosystem reaction centers. PSII is a light-driven water plastoquinone oxidoreductase, using light energy to abstract electrons from H(2)O, generating a proton gradient subsequently used for ATP formation. This chain is Photosystem II reaction center protein Z, found in Euglena stellata.